Here is a 96-residue protein sequence, read N- to C-terminus: Interleukin-8 (96 aa).

The first 22 residues, 1 to 22 (MTSKLAIALLATFMLSAALCEA), serve as a signal peptide directing secretion. Citrulline is present on Arg27. Cystine bridges form between Cys34-Cys61 and Cys36-Cys78.

Belongs to the intercrine alpha (chemokine CxC) family. In terms of assembly, homodimer. Interacts with TNFAIP6 (via Link domain); this interaction interferes with chemokine binding to glycosaminoglycans. Citrullination at Arg-27 prevents proteolysis, and dampens tissue inflammation, it also enhances leukocytosis, possibly through impaired chemokine clearance from the blood circulation.

The protein localises to the secreted. Functionally, chemotactic factor that mediates inflammatory response by attracting neutrophils, basophils, and T-cells to clear pathogens and protect the host from infection. Also plays an important role in neutrophil activation. Released in response to an inflammatory stimulus, exerts its effect by binding to the G-protein-coupled receptors CXCR1 and CXCR2, primarily found in neutrophils, monocytes and endothelial cells. G-protein heterotrimer (alpha, beta, gamma subunits) constitutively binds to CXCR1/CXCR2 receptor and activation by IL8 leads to beta and gamma subunits release from Galpha (GNAI2 in neutrophils) and activation of several downstream signaling pathways including PI3K and MAPK pathways. The protein is Interleukin-8 (CXCL8) of Dasypus novemcinctus (Nine-banded armadillo).